The primary structure comprises 476 residues: Ribosomal protein uS12 methylthiotransferase RimO (476 aa).

Residues 7–123 enclose the MTTase N-terminal domain; it reads KSLYMMTLGC…IGDLLAAEAS (117 aa). 6 residues coordinate [4Fe-4S] cluster: C16, C52, C86, C158, C162, and C165. The region spanning 144–373 is the Radical SAM core domain; that stretch reads SMPKYTAYLK…MAIQKRINRE (230 aa). The TRAM domain occupies 376 to 444; that stretch reads KKLVGKRLEV…DYDLVARVVE (69 aa). Over residues 445–459 the composition is skewed to basic and acidic residues; that stretch reads RPDPKQREHTARDAH. Residues 445-476 form a disordered region; it reads RPDPKQREHTARDAHPAPLPVAAMQRPAPRAE.

It belongs to the methylthiotransferase family. RimO subfamily. [4Fe-4S] cluster is required as a cofactor.

The protein localises to the cytoplasm. It carries out the reaction L-aspartate(89)-[ribosomal protein uS12]-hydrogen + (sulfur carrier)-SH + AH2 + 2 S-adenosyl-L-methionine = 3-methylsulfanyl-L-aspartate(89)-[ribosomal protein uS12]-hydrogen + (sulfur carrier)-H + 5'-deoxyadenosine + L-methionine + A + S-adenosyl-L-homocysteine + 2 H(+). Functionally, catalyzes the methylthiolation of an aspartic acid residue of ribosomal protein uS12. The sequence is that of Ribosomal protein uS12 methylthiotransferase RimO from Myxococcus xanthus (strain DK1622).